Reading from the N-terminus, the 166-residue chain is Phosphodiesterase MJ0936 (166 aa).

Mn(2+) contacts are provided by Asp8, His10, Asp36, Asn59, His97, His120, and His122. Positions 8, 10, 36, 59, 97, 120, and 122 each coordinate Ni(2+).

The protein belongs to the metallophosphoesterase superfamily. YfcE family. Monomer. It depends on Ni(2+) as a cofactor. Requires Mn(2+) as cofactor.

Its activity is regulated as follows. Competitively inhibited by phosphate. Shows phosphodiesterase activity. Hydrolyzes phosphodiesters bonds in the artificial chromogenic substrates bis-p-nitrophenyl phosphate (bis-pNPP), and less efficiently thymidine 5'-monophosphate p-nitrophenyl ester (pNP-TMP) and p-nitrophenylphosphorylcholine (pNPPC). No catalytic activity was found toward cAMP or cGMP, nucleotides or phospholipase substrates such as phosphatidylcholine. The physiological substrate is unknown. This is Phosphodiesterase MJ0936 from Methanocaldococcus jannaschii (strain ATCC 43067 / DSM 2661 / JAL-1 / JCM 10045 / NBRC 100440) (Methanococcus jannaschii).